The sequence spans 90 residues: Cell division protein CrgA (90 aa).

The tract at residues 1–26 is disordered; it reads MPKAKVTKNSIAPVSSNPSANRTPVK. A compositionally biased stretch (polar residues) spans 7–26; sequence TKNSIAPVSSNPSANRTPVK. The next 2 helical transmembrane spans lie at 38–58 and 69–89; these read VIMF…YLVG and AWNY…TMGW.

It belongs to the CrgA family.

It is found in the cell membrane. Involved in cell division. This Corynebacterium efficiens (strain DSM 44549 / YS-314 / AJ 12310 / JCM 11189 / NBRC 100395) protein is Cell division protein CrgA.